Reading from the N-terminus, the 219-residue chain is Protein-L-isoaspartate O-methyltransferase (219 aa).

Ser-67 is an active-site residue.

This sequence belongs to the methyltransferase superfamily. L-isoaspartyl/D-aspartyl protein methyltransferase family.

It localises to the cytoplasm. It catalyses the reaction [protein]-L-isoaspartate + S-adenosyl-L-methionine = [protein]-L-isoaspartate alpha-methyl ester + S-adenosyl-L-homocysteine. Functionally, catalyzes the methyl esterification of L-isoaspartyl residues in peptides and proteins that result from spontaneous decomposition of normal L-aspartyl and L-asparaginyl residues. It plays a role in the repair and/or degradation of damaged proteins. This Cereibacter sphaeroides (strain ATCC 17029 / ATH 2.4.9) (Rhodobacter sphaeroides) protein is Protein-L-isoaspartate O-methyltransferase.